Consider the following 220-residue polypeptide: PKHD-type hydroxylase PCC7424_1929 (220 aa).

In terms of domain architecture, Fe2OG dioxygenase spans 77–173 (KIHSLLFSRY…RLVAVGWVQS (97 aa)). The Fe cation site is built by His95, Asp97, and His154. Arg164 provides a ligand contact to 2-oxoglutarate.

The cofactor is Fe(2+). Requires L-ascorbate as cofactor.

This Gloeothece citriformis (strain PCC 7424) (Cyanothece sp. (strain PCC 7424)) protein is PKHD-type hydroxylase PCC7424_1929.